Here is a 621-residue protein sequence, read N- to C-terminus: Probable potassium transport system protein Kup 2 (621 aa).

12 helical membrane-spanning segments follow: residues 12–32, 52–72, 101–121, 138–158, 166–186, 213–233, 249–269, 286–306, 338–358, 370–390, 396–416, and 420–440; these read ITVA…LYAL, VLSL…VAII, WIIT…SMIT, PDLK…LFFI, VGKL…ILGL, GLAF…EALY, FGFV…LLLI, ALIP…QAVI, IYVP…VIGF, IAVT…MVLM, LLVA…FAAN, and IPEG…VLTT.

The protein belongs to the HAK/KUP transporter (TC 2.A.72) family.

The protein resides in the cell inner membrane. It catalyses the reaction K(+)(in) + H(+)(in) = K(+)(out) + H(+)(out). In terms of biological role, transport of potassium into the cell. Likely operates as a K(+):H(+) symporter. This Dechloromonas aromatica (strain RCB) protein is Probable potassium transport system protein Kup 2.